The sequence spans 267 residues: Hydroxyethylthiazole kinase 2 (267 aa).

Met-41 contributes to the substrate binding site. The ATP site is built by Lys-116 and Thr-166. A substrate-binding site is contributed by Gly-193.

This sequence belongs to the Thz kinase family. Requires Mg(2+) as cofactor.

It catalyses the reaction 5-(2-hydroxyethyl)-4-methylthiazole + ATP = 4-methyl-5-(2-phosphooxyethyl)-thiazole + ADP + H(+). The protein operates within cofactor biosynthesis; thiamine diphosphate biosynthesis; 4-methyl-5-(2-phosphoethyl)-thiazole from 5-(2-hydroxyethyl)-4-methylthiazole: step 1/1. Functionally, catalyzes the phosphorylation of the hydroxyl group of 4-methyl-5-beta-hydroxyethylthiazole (THZ). The polypeptide is Hydroxyethylthiazole kinase 2 (Streptococcus pneumoniae (strain Hungary19A-6)).